Here is an 840-residue protein sequence, read N- to C-terminus: Probable alpha-glucuronidase A (840 aa).

Positions 1 to 19 are cleaved as a signal peptide; the sequence is MWSGIPIFALLSSIGIAAA. N-linked (GlcNAc...) asparagine glycosylation is found at Asn50, Asn149, Asn222, Asn262, Asn279, Asn310, Asn465, Asn527, Asn576, Asn610, Asn682, Asn723, and Asn732.

It belongs to the glycosyl hydrolase 67 family.

It is found in the secreted. The enzyme catalyses an alpha-D-glucuronoside + H2O = D-glucuronate + an alcohol. Functionally, alpha-glucuronidase involved in the hydrolysis of xylan, a major structural heterogeneous polysaccharide found in plant biomass representing the second most abundant polysaccharide in the biosphere, after cellulose. Releases 4-O-methylglucuronic acid from xylan. The chain is Probable alpha-glucuronidase A (aguA) from Aspergillus fumigatus (strain CBS 144.89 / FGSC A1163 / CEA10) (Neosartorya fumigata).